A 409-amino-acid polypeptide reads, in one-letter code: ATPase ASNA1 homolog (409 aa).

21–28 (KGGVGKTT) provides a ligand contact to ATP. Residue Asp62 is part of the active site. 2 residues coordinate ATP: Glu303 and Asn330. Zn(2+) is bound by residues Cys342 and Cys345.

It belongs to the arsA ATPase family. In terms of assembly, homodimer.

The protein localises to the cytoplasm. The protein resides in the endoplasmic reticulum. In terms of biological role, ATPase required for the post-translational delivery of tail-anchored (TA) proteins to the endoplasmic reticulum. Recognizes and selectively binds the transmembrane domain of TA proteins in the cytosol. This complex then targets to the endoplasmic reticulum by membrane-bound receptors, where the tail-anchored protein is released for insertion. This process is regulated by ATP binding and hydrolysis. ATP binding drives the homodimer towards the closed dimer state, facilitating recognition of newly synthesized TA membrane proteins. ATP hydrolysis is required for insertion. Subsequently, the homodimer reverts towards the open dimer state, lowering its affinity for the membrane-bound receptor, and returning it to the cytosol to initiate a new round of targeting. This is ATPase ASNA1 homolog from Leishmania infantum.